The sequence spans 145 residues: Large ribosomal subunit protein uL11 (145 aa).

Belongs to the universal ribosomal protein uL11 family. In terms of assembly, part of the ribosomal stalk of the 50S ribosomal subunit. Interacts with L10 and the large rRNA to form the base of the stalk. L10 forms an elongated spine to which L12 dimers bind in a sequential fashion forming a multimeric L10(L12)X complex. Post-translationally, one or more lysine residues are methylated.

Functionally, forms part of the ribosomal stalk which helps the ribosome interact with GTP-bound translation factors. The chain is Large ribosomal subunit protein uL11 from Rickettsia typhi (strain ATCC VR-144 / Wilmington).